We begin with the raw amino-acid sequence, 124 residues long: Small ribosomal subunit protein uS12 (124 aa).

D89 is subject to 3-methylthioaspartic acid. The segment at 105-124 is disordered; sequence QGVKNRKQARSRYGAKKEKS. Residues 108 to 118 show a composition bias toward basic residues; the sequence is KNRKQARSRYG.

The protein belongs to the universal ribosomal protein uS12 family. Part of the 30S ribosomal subunit. Contacts proteins S8 and S17. May interact with IF1 in the 30S initiation complex.

Functionally, with S4 and S5 plays an important role in translational accuracy. In terms of biological role, interacts with and stabilizes bases of the 16S rRNA that are involved in tRNA selection in the A site and with the mRNA backbone. Located at the interface of the 30S and 50S subunits, it traverses the body of the 30S subunit contacting proteins on the other side and probably holding the rRNA structure together. The combined cluster of proteins S8, S12 and S17 appears to hold together the shoulder and platform of the 30S subunit. This chain is Small ribosomal subunit protein uS12, found in Mycobacterium leprae (strain Br4923).